The sequence spans 363 residues: tRNA dimethylallyltransferase (363 aa).

Residues 1 to 55 are unknown insert; the sequence is MLACNDDTSLYLLVKQVTKKEIYSNDLENGNVKRGASMQSLYLIGDPKCCRNNSS. Residue 65-72 participates in ATP binding; sequence GPTASGKS. 67–72 provides a ligand contact to substrate; that stretch reads TASGKS. 2 interaction with substrate tRNA regions span residues 90–93 and 214–218; these read DSMQ and QRLIR.

It belongs to the IPP transferase family. As to quaternary structure, monomer. Mg(2+) is required as a cofactor.

The catalysed reaction is adenosine(37) in tRNA + dimethylallyl diphosphate = N(6)-dimethylallyladenosine(37) in tRNA + diphosphate. In terms of biological role, catalyzes the transfer of a dimethylallyl group onto the adenine at position 37 in tRNAs that read codons beginning with uridine, leading to the formation of N6-(dimethylallyl)adenosine (i(6)A). The sequence is that of tRNA dimethylallyltransferase from Rickettsia conorii (strain ATCC VR-613 / Malish 7).